We begin with the raw amino-acid sequence, 500 residues long: Probable malate:quinone oxidoreductase (500 aa).

The protein belongs to the MQO family. FAD serves as cofactor.

It carries out the reaction (S)-malate + a quinone = a quinol + oxaloacetate. It functions in the pathway carbohydrate metabolism; tricarboxylic acid cycle; oxaloacetate from (S)-malate (quinone route): step 1/1. This is Probable malate:quinone oxidoreductase from Prochlorococcus marinus (strain MIT 9211).